Reading from the N-terminus, the 79-residue chain is ATP synthase subunit c (79 aa).

The next 2 membrane-spanning stretches (helical) occupy residues 11-31 and 53-73; these read MAAAVMMGLAAIGAAIGIGIL and FFIVMGLVDAIPMIAVGLGLY.

This sequence belongs to the ATPase C chain family. In terms of assembly, F-type ATPases have 2 components, F(1) - the catalytic core - and F(0) - the membrane proton channel. F(1) has five subunits: alpha(3), beta(3), gamma(1), delta(1), epsilon(1). F(0) has three main subunits: a(1), b(2) and c(10-14). The alpha and beta chains form an alternating ring which encloses part of the gamma chain. F(1) is attached to F(0) by a central stalk formed by the gamma and epsilon chains, while a peripheral stalk is formed by the delta and b chains.

It is found in the cell inner membrane. F(1)F(0) ATP synthase produces ATP from ADP in the presence of a proton or sodium gradient. F-type ATPases consist of two structural domains, F(1) containing the extramembraneous catalytic core and F(0) containing the membrane proton channel, linked together by a central stalk and a peripheral stalk. During catalysis, ATP synthesis in the catalytic domain of F(1) is coupled via a rotary mechanism of the central stalk subunits to proton translocation. Functionally, key component of the F(0) channel; it plays a direct role in translocation across the membrane. A homomeric c-ring of between 10-14 subunits forms the central stalk rotor element with the F(1) delta and epsilon subunits. The polypeptide is ATP synthase subunit c (Citrobacter koseri (strain ATCC BAA-895 / CDC 4225-83 / SGSC4696)).